Reading from the N-terminus, the 380-residue chain is Cytochrome b (380 aa).

Helical transmembrane passes span 34–54, 78–99, 114–134, and 179–199; these read FGSL…LLAM, WLIR…YFHI, WNTG…GYVL, and FFAL…IHLT. Histidine 84 and histidine 98 together coordinate heme b. Heme b contacts are provided by histidine 183 and histidine 197. Histidine 202 provides a ligand contact to a ubiquinone. 4 helical membrane passes run 227–247, 289–309, 321–341, and 348–368; these read LKDI…ALFS, LGGV…PFLH, ISQL…WVGS, and FIII…VLFP.

Belongs to the cytochrome b family. The cytochrome bc1 complex contains 11 subunits: 3 respiratory subunits (MT-CYB, CYC1 and UQCRFS1), 2 core proteins (UQCRC1 and UQCRC2) and 6 low-molecular weight proteins (UQCRH/QCR6, UQCRB/QCR7, UQCRQ/QCR8, UQCR10/QCR9, UQCR11/QCR10 and a cleavage product of UQCRFS1). This cytochrome bc1 complex then forms a dimer. Requires heme b as cofactor.

It localises to the mitochondrion inner membrane. Functionally, component of the ubiquinol-cytochrome c reductase complex (complex III or cytochrome b-c1 complex) that is part of the mitochondrial respiratory chain. The b-c1 complex mediates electron transfer from ubiquinol to cytochrome c. Contributes to the generation of a proton gradient across the mitochondrial membrane that is then used for ATP synthesis. This Pachyptila turtur (Fairy prion) protein is Cytochrome b (MT-CYB).